The chain runs to 89 residues: Bombyxin A-2 (89 aa).

The first 19 residues, 1 to 19 (MKILLAIALMLSTVMWVST), serve as a signal peptide directing secretion. A Pyrrolidone carboxylic acid modification is found at Gln-20. Cystine bridges form between Cys-29/Cys-76, Cys-41/Cys-89, and Cys-75/Cys-80. A propeptide spans 50 to 68 (SDAQFASYGSAWLMPYSAG) (c peptide like).

Belongs to the insulin family. Heterodimer of a B chain and an A chain linked by two disulfide bonds.

The protein localises to the secreted. Brain peptide responsible for activation of prothoracic glands to produce ecdysone in insects. The polypeptide is Bombyxin A-2 (BBXA2) (Bombyx mori (Silk moth)).